Consider the following 226-residue polypeptide: Ribonuclease 3 (226 aa).

In terms of domain architecture, RNase III spans 6-128 (MKKLQKFIGY…IIASIFLDSN (123 aa)). Glutamate 41 contacts Mg(2+). Residue aspartate 45 is part of the active site. Asparagine 114 and glutamate 117 together coordinate Mg(2+). Glutamate 117 is an active-site residue. Positions 155–225 (DPKTRLQEYL…AQNALIRLEV (71 aa)) constitute a DRBM domain.

This sequence belongs to the ribonuclease III family. Homodimer. Mg(2+) serves as cofactor.

Its subcellular location is the cytoplasm. It carries out the reaction Endonucleolytic cleavage to 5'-phosphomonoester.. Functionally, digests double-stranded RNA. Involved in the processing of primary rRNA transcript to yield the immediate precursors to the large and small rRNAs (23S and 16S). Processes some mRNAs, and tRNAs when they are encoded in the rRNA operon. Processes pre-crRNA and tracrRNA of type II CRISPR loci if present in the organism. This Buchnera aphidicola subsp. Cinara cedri (strain Cc) protein is Ribonuclease 3.